A 355-amino-acid chain; its full sequence is Peptide chain release factor 1 (355 aa).

Position 233 is an N5-methylglutamine (Gln233). Residues 281–293 (RRNKEQERADSRR) show a composition bias toward basic and acidic residues. Residues 281–308 (RRNKEQERADSRRGQIGSGDRSERIRTY) form a disordered region.

This sequence belongs to the prokaryotic/mitochondrial release factor family. Post-translationally, methylated by PrmC. Methylation increases the termination efficiency of RF1.

Its subcellular location is the cytoplasm. Peptide chain release factor 1 directs the termination of translation in response to the peptide chain termination codons UAG and UAA. The sequence is that of Peptide chain release factor 1 from Rickettsia akari (strain Hartford).